The sequence spans 347 residues: Aromatic amino acid aminotransferase (347 aa).

K214 carries the post-translational modification N6-(pyridoxal phosphate)lysine.

It belongs to the class-II pyridoxal-phosphate-dependent aminotransferase family. As to quaternary structure, homodimer. Pyridoxal 5'-phosphate is required as a cofactor.

It catalyses the reaction an aromatic L-alpha-amino acid + 2-oxoglutarate = an aromatic oxo-acid + L-glutamate. In terms of biological role, aminotransferase that catalyzes the conversion of aromatic amino acids and 2-oxoglutarate into corresponding aromatic oxo acids and L-glutamate. This Mycobacteroides abscessus (strain ATCC 19977 / DSM 44196 / CCUG 20993 / CIP 104536 / JCM 13569 / NCTC 13031 / TMC 1543 / L948) (Mycobacterium abscessus) protein is Aromatic amino acid aminotransferase.